A 951-amino-acid chain; its full sequence is AP-1 complex subunit beta-1 (951 aa).

An N6-acetyllysine modification is found at K318. A 3'-nitrotyrosine modification is found at Y574.

It belongs to the adaptor complexes large subunit family. As to quaternary structure, adaptor protein complex 1 (AP-1) is a heterotetramer composed of two large adaptins (gamma-type subunit AP1G1 and beta-type subunit AP1B1), a medium adaptin (mu-type subunit AP1M1 or AP1M2) and a small adaptin (sigma-type subunit AP1S1 or AP1S2 or AP1S3).

Its subcellular location is the cytoplasmic vesicle. It is found in the clathrin-coated vesicle membrane. The protein resides in the golgi apparatus. Its function is as follows. Subunit of clathrin-associated adaptor protein complex 1 that plays a role in protein sorting in the late-Golgi/trans-Golgi network (TGN) and/or endosomes. The AP complexes mediate both the recruitment of clathrin to membranes and the recognition of sorting signals within the cytosolic tails of transmembrane cargo molecules. The sequence is that of AP-1 complex subunit beta-1 (AP2B1) from Bos taurus (Bovine).